The sequence spans 344 residues: Dimethyladenosine transferase 1, mitochondrial (344 aa).

Residues 1 to 27 (MATPGALAKFRLPPLPTIGEIVKLFNL) constitute a mitochondrion transit peptide. Positions 36, 38, 63, 85, 86, 111, 112, and 141 each coordinate S-adenosyl-L-methionine.

This sequence belongs to the class I-like SAM-binding methyltransferase superfamily. rRNA adenine N(6)-methyltransferase family. KsgA subfamily.

The protein resides in the mitochondrion. The enzyme catalyses adenosine(N)/adenosine(N+1) in rRNA + 4 S-adenosyl-L-methionine = N(6)-dimethyladenosine(N)/N(6)-dimethyladenosine(N+1) in rRNA + 4 S-adenosyl-L-homocysteine + 4 H(+). Its function is as follows. Mitochondrial methyltransferase which uses S-adenosyl methionine to dimethylate two highly conserved adjacent adenosine residues (A1583 and A1584) within the loop of helix 45 at the 3-prime end of 12S rRNA, thereby regulating the assembly or stability of the small subunit of the mitochondrial ribosome. Also required for basal transcription of mitochondrial DNA, probably via its interaction with POLRMT and TFAM. Stimulates transcription independently of the methyltransferase activity. In Xenopus laevis (African clawed frog), this protein is Dimethyladenosine transferase 1, mitochondrial (tfb1m.L).